A 320-amino-acid chain; its full sequence is tRNA-cytidine(32) 2-sulfurtransferase (320 aa).

The short motif at 54–59 is the PP-loop motif element; sequence SGGKDS. [4Fe-4S] cluster is bound by residues Cys129, Cys132, and Cys220.

Belongs to the TtcA family. In terms of assembly, homodimer. The cofactor is Mg(2+). Requires [4Fe-4S] cluster as cofactor.

The protein localises to the cytoplasm. It catalyses the reaction cytidine(32) in tRNA + S-sulfanyl-L-cysteinyl-[cysteine desulfurase] + AH2 + ATP = 2-thiocytidine(32) in tRNA + L-cysteinyl-[cysteine desulfurase] + A + AMP + diphosphate + H(+). The protein operates within tRNA modification. Catalyzes the ATP-dependent 2-thiolation of cytidine in position 32 of tRNA, to form 2-thiocytidine (s(2)C32). The sulfur atoms are provided by the cysteine/cysteine desulfurase (IscS) system. The chain is tRNA-cytidine(32) 2-sulfurtransferase from Bordetella bronchiseptica (strain ATCC BAA-588 / NCTC 13252 / RB50) (Alcaligenes bronchisepticus).